A 227-amino-acid polypeptide reads, in one-letter code: Agamous-like MADS-box protein AGL17 (227 aa).

One can recognise an MADS-box domain in the interval 3–57 (RGKIVIQKIDDSTSRQVTFSKRRKGLIKKAKELAILCDAEVCLIIFSNTDKLYDF). Residues 86–176 (VKFWQREAET…SRKVQRIHQE (91 aa)) form the K-box domain.

In terms of tissue distribution, preferentially expressed in roots.

The protein resides in the nucleus. Its function is as follows. Probable transcription factor. This chain is Agamous-like MADS-box protein AGL17 (AGL17), found in Arabidopsis thaliana (Mouse-ear cress).